Reading from the N-terminus, the 422-residue chain is Probable glycosidase CRR1 (422 aa).

Positions 1-20 (MRISILQLVPVVGYIGFALG) are cleaved as a signal peptide. Residues 67-339 (DEESCAPIPA…WENSPDIIEK (273 aa)) enclose the GH16 domain. The active-site Nucleophile is E217. E221 acts as the Proton donor in catalysis.

It belongs to the glycosyl hydrolase 16 family. CRR1 subfamily.

It localises to the spore wall. Its function is as follows. Spore specific glycosidase involved in spore wall assembly during sporulation. May be involved in copper import. The chain is Probable glycosidase CRR1 (CRR1) from Saccharomyces cerevisiae (strain ATCC 204508 / S288c) (Baker's yeast).